A 198-amino-acid chain; its full sequence is Recombination protein RecR (198 aa).

A C4-type zinc finger spans residues 56–71 (CKVCGNFSEEDECVIC). A Toprim domain is found at 79-174 (GVICVVEEPK…RVSKLASGLP (96 aa)).

The protein belongs to the RecR family.

Functionally, may play a role in DNA repair. It seems to be involved in an RecBC-independent recombinational process of DNA repair. It may act with RecF and RecO. The sequence is that of Recombination protein RecR from Tropheryma whipplei (strain Twist) (Whipple's bacillus).